A 546-amino-acid polypeptide reads, in one-letter code: Glucose-6-phosphate isomerase (546 aa).

Residue Glu356 is the Proton donor of the active site. Residues His387 and Lys507 contribute to the active site.

Belongs to the GPI family.

The protein resides in the cytoplasm. It carries out the reaction alpha-D-glucose 6-phosphate = beta-D-fructose 6-phosphate. It participates in carbohydrate biosynthesis; gluconeogenesis. It functions in the pathway carbohydrate degradation; glycolysis; D-glyceraldehyde 3-phosphate and glycerone phosphate from D-glucose: step 2/4. In terms of biological role, catalyzes the reversible isomerization of glucose-6-phosphate to fructose-6-phosphate. The chain is Glucose-6-phosphate isomerase from Syntrophus aciditrophicus (strain SB).